The chain runs to 236 residues: Pyridoxine 5'-phosphate synthase (236 aa).

Asparagine 7 provides a ligand contact to 3-amino-2-oxopropyl phosphate. 9–10 (DH) contacts 1-deoxy-D-xylulose 5-phosphate. 3-amino-2-oxopropyl phosphate is bound at residue arginine 18. Residue histidine 43 is the Proton acceptor of the active site. Residues arginine 45 and histidine 50 each coordinate 1-deoxy-D-xylulose 5-phosphate. The Proton acceptor role is filled by glutamate 69. A 1-deoxy-D-xylulose 5-phosphate-binding site is contributed by threonine 99. The Proton donor role is filled by histidine 190. 3-amino-2-oxopropyl phosphate contacts are provided by residues glycine 191 and 212–213 (GH).

The protein belongs to the PNP synthase family. Homooctamer; tetramer of dimers.

The protein resides in the cytoplasm. It carries out the reaction 3-amino-2-oxopropyl phosphate + 1-deoxy-D-xylulose 5-phosphate = pyridoxine 5'-phosphate + phosphate + 2 H2O + H(+). Its pathway is cofactor biosynthesis; pyridoxine 5'-phosphate biosynthesis; pyridoxine 5'-phosphate from D-erythrose 4-phosphate: step 5/5. In terms of biological role, catalyzes the complicated ring closure reaction between the two acyclic compounds 1-deoxy-D-xylulose-5-phosphate (DXP) and 3-amino-2-oxopropyl phosphate (1-amino-acetone-3-phosphate or AAP) to form pyridoxine 5'-phosphate (PNP) and inorganic phosphate. The protein is Pyridoxine 5'-phosphate synthase of Desulfosudis oleivorans (strain DSM 6200 / JCM 39069 / Hxd3) (Desulfococcus oleovorans).